The following is a 269-amino-acid chain: Putative 12-oxophytodienoate reductase-like protein 2A (269 aa).

FMN is bound by residues 28–30 and Gln103; that span reads PLT. 175–178 provides a ligand contact to substrate; the sequence is HGAH. Catalysis depends on Tyr180, which acts as the Proton donor. Residue Arg227 coordinates FMN.

The protein belongs to the NADH:flavin oxidoreductase/NADH oxidase family. FMN is required as a cofactor.

Functionally, putative oxophytodienoate reductase that may be involved in the biosynthesis or metabolism of oxylipin signaling molecules. This Arabidopsis thaliana (Mouse-ear cress) protein is Putative 12-oxophytodienoate reductase-like protein 2A.